The primary structure comprises 96 residues: Putative septation protein SpoVG (96 aa).

It belongs to the SpoVG family.

In terms of biological role, could be involved in septation. This is Putative septation protein SpoVG from Oceanobacillus iheyensis (strain DSM 14371 / CIP 107618 / JCM 11309 / KCTC 3954 / HTE831).